The chain runs to 208 residues: Probable GTP-binding protein EngB (208 aa).

The 174-residue stretch at 22 to 195 (GLPEIALAGR…WGALEDIFVE (174 aa)) folds into the EngB-type G domain. Residues 30-37 (GRSNVGKS), 57-61 (GKTRT), 75-78 (DLPG), 142-145 (TKSD), and 174-176 (ISS) contribute to the GTP site. The Mg(2+) site is built by S37 and T59.

It belongs to the TRAFAC class TrmE-Era-EngA-EngB-Septin-like GTPase superfamily. EngB GTPase family. Mg(2+) is required as a cofactor.

Its function is as follows. Necessary for normal cell division and for the maintenance of normal septation. This is Probable GTP-binding protein EngB from Alkaliphilus metalliredigens (strain QYMF).